An 876-amino-acid polypeptide reads, in one-letter code: Alanine--tRNA ligase (876 aa).

Lysine 74 bears the N6-acetyllysine mark. Positions 564, 568, 666, and 670 each coordinate Zn(2+).

The protein belongs to the class-II aminoacyl-tRNA synthetase family. In terms of assembly, homotetramer. Zn(2+) is required as a cofactor.

Its subcellular location is the cytoplasm. It carries out the reaction tRNA(Ala) + L-alanine + ATP = L-alanyl-tRNA(Ala) + AMP + diphosphate. In terms of biological role, catalyzes the attachment of alanine to tRNA(Ala) in a two-step reaction: alanine is first activated by ATP to form Ala-AMP and then transferred to the acceptor end of tRNA(Ala). Also edits incorrectly charged Ser-tRNA(Ala) and Gly-tRNA(Ala) via its editing domain. The protein is Alanine--tRNA ligase of Escherichia coli (strain SMS-3-5 / SECEC).